An 81-amino-acid chain; its full sequence is Putative membrane protein insertion efficiency factor (81 aa).

A disordered region spans residues 61-81; that stretch reads NDGGFDPVPPAPSSRTSSIAE.

Belongs to the UPF0161 family.

It is found in the cell inner membrane. Functionally, could be involved in insertion of integral membrane proteins into the membrane. This chain is Putative membrane protein insertion efficiency factor, found in Pseudomonas entomophila (strain L48).